A 155-amino-acid chain; its full sequence is MSAVLTAEQALKLVGEMFVYHMPFNRALGLELERYEKAFAQLAFNNQPMMVGNWAQSILHGGVIASALDVAAGLVCVGSTLTRHETISEDELRQRLSRMGTIDLRVDYLRPGRGNRFTATSSLLRAGNKVAVARVELHNEDQLYIASATATYMVG.

Belongs to the YigI thioesterase family.

It localises to the cytoplasm. It catalyses the reaction a fatty acyl-CoA + H2O = a fatty acid + CoA + H(+). The enzyme catalyses a medium-chain fatty acyl-CoA + H2O = a medium-chain fatty acid + CoA + H(+). The catalysed reaction is a long-chain fatty acyl-CoA + H2O = a long-chain fatty acid + CoA + H(+). Displays thioesterase activity against medium- to long-chain acyl-CoA substrates. Is involved in the thioesterase-dependent beta-oxidation pathway of (9Z,11E)-octadecadienoate (conjugated linoleic acid or CLA), along with TesB and FadM. The polypeptide is Medium/long-chain acyl-CoA thioesterase YigI (yigI) (Salmonella typhimurium (strain LT2 / SGSC1412 / ATCC 700720)).